The chain runs to 174 residues: Probable adenylyl-sulfate kinase (174 aa).

Residue 10–17 coordinates ATP; it reads GPSGAGKT. Ser84 (phosphoserine intermediate) is an active-site residue.

It belongs to the APS kinase family.

The catalysed reaction is adenosine 5'-phosphosulfate + ATP = 3'-phosphoadenylyl sulfate + ADP + H(+). The protein operates within sulfur metabolism; hydrogen sulfide biosynthesis; sulfite from sulfate: step 2/3. In terms of biological role, catalyzes the synthesis of activated sulfate. The chain is Probable adenylyl-sulfate kinase (cysC) from Pyrococcus abyssi (strain GE5 / Orsay).